Reading from the N-terminus, the 899-residue chain is Bifunctional uridylyltransferase/uridylyl-removing enzyme (899 aa).

Residues 1 to 342 form a uridylyltransferase region; the sequence is MPQVDPDLFD…PGDAAGRVEP (342 aa). The tract at residues 343 to 705 is uridylyl-removing; it reads LNERFQVRDG…TTQREFEGAT (363 aa). Positions 461-583 constitute an HD domain; it reads VDAHTLNLIK…VRDQTYLDYL (123 aa). ACT domains are found at residues 706 to 789 and 816 to 899; these read QIFI…IIQR and ILEI…RISI.

This sequence belongs to the GlnD family. Mg(2+) serves as cofactor.

The catalysed reaction is [protein-PII]-L-tyrosine + UTP = [protein-PII]-uridylyl-L-tyrosine + diphosphate. It carries out the reaction [protein-PII]-uridylyl-L-tyrosine + H2O = [protein-PII]-L-tyrosine + UMP + H(+). Uridylyltransferase (UTase) activity is inhibited by glutamine, while glutamine activates uridylyl-removing (UR) activity. Its function is as follows. Modifies, by uridylylation and deuridylylation, the PII regulatory proteins (GlnB and homologs), in response to the nitrogen status of the cell that GlnD senses through the glutamine level. Under low glutamine levels, catalyzes the conversion of the PII proteins and UTP to PII-UMP and PPi, while under higher glutamine levels, GlnD hydrolyzes PII-UMP to PII and UMP (deuridylylation). Thus, controls uridylylation state and activity of the PII proteins, and plays an important role in the regulation of nitrogen fixation and metabolism. In Azotobacter vinelandii (strain DJ / ATCC BAA-1303), this protein is Bifunctional uridylyltransferase/uridylyl-removing enzyme.